The sequence spans 201 residues: Lipoprotein signal peptidase (201 aa).

Transmembrane regions (helical) follow at residues 73 to 93 (SNAI…YLMI) and 97 to 117 (TIGS…NLID). Active-site residues include aspartate 126 and aspartate 144. Residues 135-155 (YSFPVFNLADCFITIGVIILI) traverse the membrane as a helical segment.

The protein belongs to the peptidase A8 family.

It is found in the cell inner membrane. It carries out the reaction Release of signal peptides from bacterial membrane prolipoproteins. Hydrolyzes -Xaa-Yaa-Zaa-|-(S,diacylglyceryl)Cys-, in which Xaa is hydrophobic (preferably Leu), and Yaa (Ala or Ser) and Zaa (Gly or Ala) have small, neutral side chains.. It functions in the pathway protein modification; lipoprotein biosynthesis (signal peptide cleavage). Its function is as follows. This protein specifically catalyzes the removal of signal peptides from prolipoproteins. This Rickettsia africae (strain ESF-5) protein is Lipoprotein signal peptidase.